The primary structure comprises 456 residues: Methionine aminopeptidase 2 (456 aa).

A compositionally biased stretch (pro residues) spans 1 to 11 (MTIPVPKPAHP). The segment at 1 to 127 (MTIPVPKPAH…SYRTTSSEKR (127 aa)) is disordered. Residues 31-45 (EADEEEDDDDEEGKE) are compositionally biased toward acidic residues. Residues 66 to 79 (KKKKKKKKKPKKKK) are compositionally biased toward basic residues. His209 is a binding site for substrate. Asp229, Asp240, and His309 together coordinate a divalent metal cation. A substrate-binding site is contributed by His317. Residues Glu343 and Glu437 each coordinate a divalent metal cation.

This sequence belongs to the peptidase M24A family. Methionine aminopeptidase eukaryotic type 2 subfamily. It depends on Co(2+) as a cofactor. Requires Zn(2+) as cofactor. Mn(2+) serves as cofactor. Fe(2+) is required as a cofactor.

The protein resides in the cytoplasm. The enzyme catalyses Release of N-terminal amino acids, preferentially methionine, from peptides and arylamides.. In terms of biological role, cotranslationally removes the N-terminal methionine from nascent proteins. The N-terminal methionine is often cleaved when the second residue in the primary sequence is small and uncharged (Met-Ala-, Cys, Gly, Pro, Ser, Thr, or Val). The polypeptide is Methionine aminopeptidase 2 (Puccinia graminis f. sp. tritici (strain CRL 75-36-700-3 / race SCCL) (Black stem rust fungus)).